Here is a 504-residue protein sequence, read N- to C-terminus: MTLYLDGETLTIEDIKSFLQQQSKVEIIDDALERVKKSRAVVERIIENEETVYGITTGFGLFSDVRIDPTQYNELQVNLIRSHACGLGEPFSKEVALVMMILRLNTLLKGHSGATLELVRQLQFFINERIIPIIPQQGSLGASGDLAPLSHLALALIGEGKVLHRGEEKDSDDVLRELNRQPLNLQAKEGLALINGTQAMTAQGVISYIEAEDLGYQSEWIAALTHQSLNGIIDAYRHDVHAVRNFQEQINVAARMRDWLEGSTLTTRQAEIRVQDAYTLRCIPQIHGASFQVFNYVKQQLEFEMNAANDNPLIFEEVNETFVISGGNFHGQPIAFALDHLKLGVSELANVSERRLERLVNPQLNGDLPAFLSPEPGLQSGAMIMQYAAASLVSENKTLAHPASVDSITSSANQEDHVSMGTTAARHGYQIIENTRRVLAIECVIALQATELKGVEGLSPKTRRKYDEFRSIVPSITHDRQFHRDIEAVAQYLKQSIYQTTACH.

A cross-link (5-imidazolinone (Ala-Gly)) is located at residues 142–144 (ASG). Residue serine 143 is modified to 2,3-didehydroalanine (Ser).

The protein belongs to the PAL/histidase family. Post-translationally, contains an active site 4-methylidene-imidazol-5-one (MIO), which is formed autocatalytically by cyclization and dehydration of residues Ala-Ser-Gly.

The protein resides in the cytoplasm. The enzyme catalyses L-histidine = trans-urocanate + NH4(+). It functions in the pathway amino-acid degradation; L-histidine degradation into L-glutamate; N-formimidoyl-L-glutamate from L-histidine: step 1/3. This Staphylococcus aureus (strain bovine RF122 / ET3-1) protein is Histidine ammonia-lyase.